Consider the following 56-residue polypeptide: Large ribosomal subunit protein bL32 (56 aa).

The protein belongs to the bacterial ribosomal protein bL32 family.

The sequence is that of Large ribosomal subunit protein bL32 from Bacillus cereus (strain ATCC 14579 / DSM 31 / CCUG 7414 / JCM 2152 / NBRC 15305 / NCIMB 9373 / NCTC 2599 / NRRL B-3711).